Here is a 247-residue protein sequence, read N- to C-terminus: Enolase-phosphatase E1 (247 aa).

It belongs to the HAD-like hydrolase superfamily. MasA/MtnC family. In terms of assembly, monomer. Mg(2+) serves as cofactor.

The catalysed reaction is 5-methylsulfanyl-2,3-dioxopentyl phosphate + H2O = 1,2-dihydroxy-5-(methylsulfanyl)pent-1-en-3-one + phosphate. It participates in amino-acid biosynthesis; L-methionine biosynthesis via salvage pathway; L-methionine from S-methyl-5-thio-alpha-D-ribose 1-phosphate: step 3/6. The protein operates within amino-acid biosynthesis; L-methionine biosynthesis via salvage pathway; L-methionine from S-methyl-5-thio-alpha-D-ribose 1-phosphate: step 4/6. Bifunctional enzyme that catalyzes the enolization of 2,3-diketo-5-methylthiopentyl-1-phosphate (DK-MTP-1-P) into the intermediate 2-hydroxy-3-keto-5-methylthiopentenyl-1-phosphate (HK-MTPenyl-1-P), which is then dephosphorylated to form the acireductone 1,2-dihydroxy-3-keto-5-methylthiopentene (DHK-MTPene). This is Enolase-phosphatase E1 from Leptospira biflexa serovar Patoc (strain Patoc 1 / Ames).